Consider the following 158-residue polypeptide: Large ribosomal subunit protein uL30 (158 aa).

It belongs to the universal ribosomal protein uL30 family. Part of the 50S ribosomal subunit.

This chain is Large ribosomal subunit protein uL30, found in Saccharolobus islandicus (strain Y.N.15.51 / Yellowstone #2) (Sulfolobus islandicus).